Here is a 498-residue protein sequence, read N- to C-terminus: MRINPTTSGSGVSTLEKKNPGRVVQIIGPVLDVAFPPGKMPNIYNALVVQGRDSVGQPINVACEVQQLLGNNRVRAIAMSATEGLTRGMEVIDTGAPISVPVGGATLGRIFNVLGEPVDNLGPVDTSTTSPIHRSAPAFIQLDTKLSIFETGIEVVDLLAPYRRGGKIGLFGGAGVGKTVLIMELINNIAKAHGGVSVFGGVGERTREGNDLYMEMKESGVINEENIAESKVALVYGQMNEPPGARMRVGLTALTMAEYFRDVNEQDVLLFIDNIFRFVQAGSEVSALLGRMPSAVGYQPTLSTEMGSLQERITSTKEGSITSIQAVYVPADDLTDPAPATTFAHLDATTVLSRGLAAKGIYPAVDPLDSTSTMLQPRIVGEEHYETAQRVKQTLQRYKELQDIIAILGLDELSEEDRLLVARARKIERFLSQPFFVAEVFTGSPGKYVGLAETIRGFQLILSGELDGLPEQAFYLVGNIDEATAKAMNLEMESNLKK.

172-179 (GGAGVGKT) is a binding site for ATP.

Belongs to the ATPase alpha/beta chains family. In terms of assembly, F-type ATPases have 2 components, CF(1) - the catalytic core - and CF(0) - the membrane proton channel. CF(1) has five subunits: alpha(3), beta(3), gamma(1), delta(1), epsilon(1). CF(0) has four main subunits: a(1), b(1), b'(1) and c(9-12).

The protein resides in the plastid. It localises to the chloroplast thylakoid membrane. It carries out the reaction ATP + H2O + 4 H(+)(in) = ADP + phosphate + 5 H(+)(out). Its function is as follows. Produces ATP from ADP in the presence of a proton gradient across the membrane. The catalytic sites are hosted primarily by the beta subunits. The protein is ATP synthase subunit beta, chloroplastic of Nicotiana tabacum (Common tobacco).